A 331-amino-acid polypeptide reads, in one-letter code: Endo-1,4-beta-xylanase 2 (331 aa).

An N-terminal signal peptide occupies residues 1–17 (MKASSVLLGLAPLAALA). Residues 31–329 (QQSIDALMKA…KPAYNSVVQA (299 aa)) form the GH10 domain. N105 carries an N-linked (GlcNAc...) asparagine glycan. E159 serves as the catalytic Proton donor. The Nucleophile role is filled by E266. The cysteines at positions 284 and 290 are disulfide-linked. The N-linked (GlcNAc...) asparagine glycan is linked to N301.

The protein belongs to the glycosyl hydrolase 10 (cellulase F) family.

The protein resides in the secreted. The catalysed reaction is Endohydrolysis of (1-&gt;4)-beta-D-xylosidic linkages in xylans.. It participates in glycan degradation; xylan degradation. Functionally, endo-1,4-beta-xylanase involved in the hydrolysis of xylan, a major structural heterogeneous polysaccharide found in plant biomass representing the second most abundant polysaccharide in the biosphere, after cellulose. Accounts for approximately 70 percent of the endoxylanase activity in the culture filtrate. The chain is Endo-1,4-beta-xylanase 2 (XYL2) from Pyricularia grisea (Crabgrass-specific blast fungus).